Here is a 500-residue protein sequence, read N- to C-terminus: Cytochrome P450 71B38 (500 aa).

A helical transmembrane segment spans residues 3–23 (IFLCFLLLLPLSLILFKKLLP). Cys-441 provides a ligand contact to heme.

This sequence belongs to the cytochrome P450 family. Requires heme as cofactor.

Its subcellular location is the membrane. This Arabidopsis thaliana (Mouse-ear cress) protein is Cytochrome P450 71B38 (CYP71B38).